The primary structure comprises 289 residues: Energy-coupling factor transporter ATP-binding protein EcfA2 (289 aa).

Residues 3–245 form the ABC transporter domain; that stretch reads IEFKNVDYVY…QEWVKKHYLD (243 aa). Residue 40–47 participates in ATP binding; the sequence is GHTGSGKS.

This sequence belongs to the ABC transporter superfamily. Energy-coupling factor EcfA family. As to quaternary structure, forms a stable energy-coupling factor (ECF) transporter complex composed of 2 membrane-embedded substrate-binding proteins (S component), 2 ATP-binding proteins (A component) and 2 transmembrane proteins (T component).

It is found in the cell membrane. ATP-binding (A) component of a common energy-coupling factor (ECF) ABC-transporter complex. Unlike classic ABC transporters this ECF transporter provides the energy necessary to transport a number of different substrates. In Lactobacillus johnsonii (strain CNCM I-12250 / La1 / NCC 533), this protein is Energy-coupling factor transporter ATP-binding protein EcfA2.